We begin with the raw amino-acid sequence, 297 residues long: MKAKTLSRHLREGVKNLSRNGWMTFASVSAVTVTLLLVGVFLTAIMNMNHFATKVEQDVEIRVHIDPAAKEADQKKLEDDMSKIAKVESIKYSSKEEELKRLIKSLGDSGKTFELFEQDNPLKNVFVVKAKEPTDTATIAKKIEKMQFVSNVQYGKGQVERLFDTVKTGRNIGIVLIAGLLFTAMFLISNTIKITIYARSTEIEIMKLVGATNWFIRWPFLLEGLFLGVLGSIIPIGLILVTYNSLQGMFNEKLGGTIFELLPYSPFVFQLAGLLVLIGALIGMWGSVMSIRRFLKV.

At 1 to 24 the chain is on the cytoplasmic side; the sequence is MKAKTLSRHLREGVKNLSRNGWMT. The helical transmembrane segment at 25 to 45 threads the bilayer; sequence FASVSAVTVTLLLVGVFLTAI. Residues 46 to 171 are Extracellular-facing; sequence MNMNHFATKV…LFDTVKTGRN (126 aa). The helical transmembrane segment at 172–192 threads the bilayer; it reads IGIVLIAGLLFTAMFLISNTI. Over 193 to 219 the chain is Cytoplasmic; sequence KITIYARSTEIEIMKLVGATNWFIRWP. A helical transmembrane segment spans residues 220-240; that stretch reads FLLEGLFLGVLGSIIPIGLIL. The Extracellular portion of the chain corresponds to 241-270; the sequence is VTYNSLQGMFNEKLGGTIFELLPYSPFVFQ. The helical transmembrane segment at 271–291 threads the bilayer; that stretch reads LAGLLVLIGALIGMWGSVMSI. Over 292–297 the chain is Cytoplasmic; that stretch reads RRFLKV.

It belongs to the ABC-4 integral membrane protein family. FtsX subfamily. In terms of assembly, interacts with FtsE.

The protein resides in the cell membrane. In terms of biological role, part of the ABC transporter FtsEX involved in asymmetric cellular division facilitating the initiation of sporulation. This chain is Cell division protein FtsX, found in Bacillus anthracis.